A 291-amino-acid chain; its full sequence is Nucleotide-binding protein lhv_0732 (291 aa).

ATP is bound at residue 13 to 20 (GMSGAGKT). GTP is bound at residue 61-64 (DLRV).

The protein belongs to the RapZ-like family.

In terms of biological role, displays ATPase and GTPase activities. The sequence is that of Nucleotide-binding protein lhv_0732 from Lactobacillus helveticus (strain DPC 4571).